The sequence spans 390 residues: E3 ubiquitin-protein ligase At4g11680 (390 aa).

Positions 1–19 (MSSSSSTTTNTTTESDSSS) are enriched in low complexity. The interval 1–39 (MSSSSSTTTNTTTESDSSSLPTHIGRSNSDGIIDTTPFL) is disordered. A run of 5 helical transmembrane segments spans residues 109–129 (VVFL…AVLI), 142–162 (VWVV…CVEY), 212–232 (MFSF…GQTL), 244–264 (IIFL…ACVI), and 265–285 (GLAV…VADQ). Residues 338 to 379 (CCICLCEYEDGVELRELPCNHHFHCTCIDKWLHINSRCPLCK) form an RING-type; atypical zinc finger.

Its subcellular location is the membrane. It catalyses the reaction S-ubiquitinyl-[E2 ubiquitin-conjugating enzyme]-L-cysteine + [acceptor protein]-L-lysine = [E2 ubiquitin-conjugating enzyme]-L-cysteine + N(6)-ubiquitinyl-[acceptor protein]-L-lysine.. It functions in the pathway protein modification; protein ubiquitination. Functionally, mediates E2-dependent protein ubiquitination in vitro. This is E3 ubiquitin-protein ligase At4g11680 from Arabidopsis thaliana (Mouse-ear cress).